The chain runs to 342 residues: Tetraacyldisaccharide 4'-kinase (342 aa).

68–75 lines the ATP pocket; it reads TVGGTGKT.

The protein belongs to the LpxK family.

The catalysed reaction is a lipid A disaccharide + ATP = a lipid IVA + ADP + H(+). It functions in the pathway glycolipid biosynthesis; lipid IV(A) biosynthesis; lipid IV(A) from (3R)-3-hydroxytetradecanoyl-[acyl-carrier-protein] and UDP-N-acetyl-alpha-D-glucosamine: step 6/6. Functionally, transfers the gamma-phosphate of ATP to the 4'-position of a tetraacyldisaccharide 1-phosphate intermediate (termed DS-1-P) to form tetraacyldisaccharide 1,4'-bis-phosphate (lipid IVA). This chain is Tetraacyldisaccharide 4'-kinase, found in Burkholderia lata (strain ATCC 17760 / DSM 23089 / LMG 22485 / NCIMB 9086 / R18194 / 383).